The following is a 646-amino-acid chain: Lipoteichoic acid synthase (646 aa).

Residues 1 to 7 (MSLPKKK) lie on the Cytoplasmic side of the membrane. Residues 8 to 28 (IGIFAFFLLTVFTITLKTYFS) traverse the membrane as a helical segment. Over 29–43 (YYVDFSLGVKGLVQN) the chain is Extracellular. A helical membrane pass occupies residues 44–64 (LILLMNPYSLIALVLSVFLFF). Topologically, residues 65-68 (KGKK) are cytoplasmic. Residues 69–89 (AFWFIFIGGFLLTFLLYANVV) traverse the membrane as a helical segment. Over 90–119 (YFRFFSDFLTFSTLNQAGNVESMGGAVSAS) the chain is Extracellular. The chain crosses the membrane as a helical span at residues 120–140 (FKWYDFVYFIDTIIYLAILIF). The Cytoplasmic segment spans residues 141–153 (KRKWLDNRAFSKK). Residues 154 to 174 (FVPVVMATSVALFFLNLAFAE) form a helical membrane-spanning segment. Residues 175–646 (TDRPELLTRT…KSGPKGNEKK (472 aa)) are Extracellular-facing. Mn(2+) is bound by residues Glu-255 and Thr-300. Thr-300 is a catalytic residue. His-416 contributes to the substrate binding site. Residues Asp-475 and His-476 each coordinate Mn(2+).

This sequence belongs to the LTA synthase family. Post-translationally, proteolytically cleaved.

Its subcellular location is the cell membrane. It is found in the secreted. It functions in the pathway cell wall biogenesis; lipoteichoic acid biosynthesis. Functionally, catalyzes the polymerization of lipoteichoic acid (LTA) polyglycerol phosphate, a reaction that presumably uses phosphatidylglycerol (PG) as substrate. Is required for staphylococcal growth and cell division process. This chain is Lipoteichoic acid synthase (ltaS), found in Staphylococcus epidermidis (strain ATCC 35984 / DSM 28319 / BCRC 17069 / CCUG 31568 / BM 3577 / RP62A).